Reading from the N-terminus, the 696-residue chain is MDAHELSFRDGHGSSTSTMKDGCASAEKPHYLPGDSSFTSVFGPSETVEDVETEPGSTQDKPHSFNTQKPIRENLAGKNVAPFLARHIPEQYAPLGSQGGQPVEISSANSKYCYRHRPDLKCRRQADEPTMDKLQRELETLPQSDQQGIAHAWSIFSAAPAKHRKLILQGIMAQCCFPQLSFISATVRDLIRIDFLTALPPEISFKILCYLDTTSLCKAAQVSRRWRALADDDVVWHRMCEQHIHRKCKKCGWGLPLLDRKRLRESKREIERRAATWDVSKQPAGIEGSSATIETAAAGSKRKPESGKEDTAMVKRQCTSIVSQSEQNEDYFKTRYRPWKEVYKDRFKVGTNWKYGRCSTRVFKGHSNGIMCLQFEDNILATGSYDATIKIWDTETGEELRTLKGHQSGIRCLQFDDTKLISGSMDHTLKVWNWRTGECISTYSGHRGGVVGLHFDATILASGSVDKTVKIWNFEDKSTCLLRGHTDWVNAVRVDSASRTVFSASDDCTVKLWDLDTKSCIRTFHGHVGQVQQVVPLPREFEFEDHDVECENDNVSVTSGDSPAASPQALPGFDGQTSDTPSSAFGPAFDDGRPSPPRYIVTSALDSTIRLWETSSGRCLRTFFGHLEGVWALAADTLRIVSGAEDRMVKIWDPRTGKCERTFTGHSGPVTCIGLGDSRFATGSEDCEVRMYSFQT.

Basic and acidic residues predominate over residues 1 to 12 (MDAHELSFRDGH). A disordered region spans residues 1–72 (MDAHELSFRD…HSFNTQKPIR (72 aa)). The segment covering 55–69 (PGSTQDKPHSFNTQK) has biased composition (polar residues). The F-box domain maps to 193–239 (IDFLTALPPEISFKILCYLDTTSLCKAAQVSRRWRALADDDVVWHRM). A disordered region spans residues 290–314 (SATIETAAAGSKRKPESGKEDTAMV). Residues 302–313 (RKPESGKEDTAM) show a composition bias toward basic and acidic residues. WD repeat units follow at residues 365-402 (GHSN…ELRT), 405-444 (GHQS…STYS), 446-482 (HRGG…TCLL), 484-525 (GHTD…RTFH), 579-622 (DTPS…CLRT), 623-662 (FFGH…CERT), and 665-696 (GHSG…SFQT). The interval 554-596 (NVSVTSGDSPAASPQALPGFDGQTSDTPSSAFGPAFDDGRPSP) is disordered.

It belongs to the WD repeat MET30/SCONB/SCON-2 family. Component of the SCF(sconB) E3 ubiquitin ligase complex.

Its pathway is protein modification; protein ubiquitination. Functionally, component of the SCF(sconB) E3 ubiquitin ligase complex involved in the regulation of sulfur metabolite repression, probably by mediating the inactivation or degradation of the metR transcription factor. The polypeptide is Probable E3 ubiquitin ligase complex SCF subunit sconB (sconB) (Aspergillus fumigatus (strain ATCC MYA-4609 / CBS 101355 / FGSC A1100 / Af293) (Neosartorya fumigata)).